Reading from the N-terminus, the 413-residue chain is Probable protein S-acyltransferase 3 (413 aa).

The next 2 membrane-spanning stretches (helical) occupy residues 65–85 and 96–116; these read LTSF…LVWI and VLAS…LTSA. The DHHC domain occupies 171–221; that stretch reads KFCDTCLLYRPPRASHCSICNNCVQRFDHHCPWVGQCIARRNYPFFICFIS. The active-site S-palmitoyl cysteine intermediate is the cysteine 201. 2 consecutive transmembrane segments (helical) span residues 216–236 and 255–275; these read FICF…FSWI and SVIL…LTIF. Residues 364 to 413 form a disordered region; sequence RDSPRKLPLPTRNLDDIKDISDNYDRSTTTREDASDRDPSFFSSQLDLPK. Over residues 376–402 the composition is skewed to basic and acidic residues; sequence NLDDIKDISDNYDRSTTTREDASDRDP. The span at 404 to 413 shows a compositional bias: polar residues; that stretch reads FFSSQLDLPK.

It belongs to the DHHC palmitoyltransferase family. As to expression, expressed in flowers and pollen.

The protein localises to the endoplasmic reticulum membrane. Its subcellular location is the cytoplasmic vesicle membrane. It carries out the reaction L-cysteinyl-[protein] + hexadecanoyl-CoA = S-hexadecanoyl-L-cysteinyl-[protein] + CoA. Functionally, palmitoyl acyltransferase. The protein is Probable protein S-acyltransferase 3 (PAT03) of Arabidopsis thaliana (Mouse-ear cress).